We begin with the raw amino-acid sequence, 446 residues long: Tubulin alpha-2 chain (446 aa).

Positions 1–4 match the MREC motif motif; sequence MREC. Residues Gln11, Glu68, Ser137, Gly141, Thr142, Ser176, Asn203, and Asn225 each contribute to the GTP site. Glu68 serves as a coordination point for Mg(2+). The active site involves Glu251.

The protein belongs to the tubulin family. As to quaternary structure, dimer of alpha and beta chains. A typical microtubule is a hollow water-filled tube with an outer diameter of 25 nm and an inner diameter of 15 nM. Alpha-beta heterodimers associate head-to-tail to form protofilaments running lengthwise along the microtubule wall with the beta-tubulin subunit facing the microtubule plus end conferring a structural polarity. Microtubules usually have 13 protofilaments but different protofilament numbers can be found in some organisms and specialized cells. Mg(2+) is required as a cofactor. Post-translationally, some glutamate residues at the C-terminus are polyglycylated, resulting in polyglycine chains on the gamma-carboxyl group. Glycylation is mainly limited to tubulin incorporated into axonemes (cilia and flagella) whereas glutamylation is prevalent in neuronal cells, centrioles, axonemes, and the mitotic spindle. Both modifications can coexist on the same protein on adjacent residues, and lowering polyglycylation levels increases polyglutamylation, and reciprocally. The precise function of polyglycylation is still unclear. Some glutamate residues at the C-terminus are polyglutamylated, resulting in polyglutamate chains on the gamma-carboxyl group. Polyglutamylation plays a key role in microtubule severing by spastin (SPAST). SPAST preferentially recognizes and acts on microtubules decorated with short polyglutamate tails: severing activity by SPAST increases as the number of glutamates per tubulin rises from one to eight, but decreases beyond this glutamylation threshold. As to expression, testis specific.

It is found in the cytoplasm. The protein resides in the cytoskeleton. It carries out the reaction GTP + H2O = GDP + phosphate + H(+). Functionally, tubulin is the major constituent of microtubules, a cylinder consisting of laterally associated linear protofilaments composed of alpha- and beta-tubulin heterodimers. Microtubules grow by the addition of GTP-tubulin dimers to the microtubule end, where a stabilizing cap forms. Below the cap, tubulin dimers are in GDP-bound state, owing to GTPase activity of alpha-tubulin. The sequence is that of Tubulin alpha-2 chain from Gallus gallus (Chicken).